The following is a 1001-amino-acid chain: Transcription-repair-coupling factor (1001 aa).

The Helicase ATP-binding domain maps to 499–658 (DLSSHRVMDR…LSQIKGISSL (160 aa)). 512–519 (GDVGFGKT) provides a ligand contact to ATP. The DEEH box motif lies at 611–614 (DEEH). The Helicase C-terminal domain occupies 679 to 835 (LLKEIIYREL…SIAYHDLEIR (157 aa)).

It in the N-terminal section; belongs to the UvrB family. This sequence in the C-terminal section; belongs to the helicase family. RecG subfamily.

It localises to the cytoplasm. Its function is as follows. Couples transcription and DNA repair by recognizing RNA polymerase (RNAP) stalled at DNA lesions. Mediates ATP-dependent release of RNAP and its truncated transcript from the DNA, and recruitment of nucleotide excision repair machinery to the damaged site. This Helicobacter pylori (strain J99 / ATCC 700824) (Campylobacter pylori J99) protein is Transcription-repair-coupling factor.